The chain runs to 333 residues: Zinc-type alcohol dehydrogenase-like protein SACOL2177 (333 aa).

The protein belongs to the zinc-containing alcohol dehydrogenase family. Quinone oxidoreductase subfamily.

The polypeptide is Zinc-type alcohol dehydrogenase-like protein SACOL2177 (Staphylococcus aureus (strain COL)).